The primary structure comprises 292 residues: GTP cyclohydrolase FolE2 (292 aa).

It belongs to the GTP cyclohydrolase IV family.

The catalysed reaction is GTP + H2O = 7,8-dihydroneopterin 3'-triphosphate + formate + H(+). Its pathway is cofactor biosynthesis; 7,8-dihydroneopterin triphosphate biosynthesis; 7,8-dihydroneopterin triphosphate from GTP: step 1/1. Functionally, converts GTP to 7,8-dihydroneopterin triphosphate. The sequence is that of GTP cyclohydrolase FolE2 from Staphylococcus aureus (strain MRSA252).